The primary structure comprises 115 residues: NADH-ubiquinone oxidoreductase chain 3 (115 aa).

The next 3 membrane-spanning stretches (helical) occupy residues 3–23 (LFIM…LNLL), 55–75 (FFMV…LLPL), and 87–107 (TITW…YEWL).

Belongs to the complex I subunit 3 family.

It is found in the mitochondrion membrane. The catalysed reaction is a ubiquinone + NADH + 5 H(+)(in) = a ubiquinol + NAD(+) + 4 H(+)(out). Core subunit of the mitochondrial membrane respiratory chain NADH dehydrogenase (Complex I) that is believed to belong to the minimal assembly required for catalysis. Complex I functions in the transfer of electrons from NADH to the respiratory chain. The immediate electron acceptor for the enzyme is believed to be ubiquinone. This is NADH-ubiquinone oxidoreductase chain 3 (MT-ND3) from Alligator mississippiensis (American alligator).